A 435-amino-acid polypeptide reads, in one-letter code: MTNSKLTETLTFECETGNYHTFCPISCVAWLYQKIEDSFFLVIGTKTCGYFLQNALGVMIFAEPRYAMAELEEADISAQLNDYKELKRLCLQIKQDRNPSVIVWIGTCTTEIIKMDLEGMAPRLEAEIQTPIVVARANGLDYAFTQGEDTVLAAMVQRCPSNAPEQNQIEKKSLVLFGSLPTNVATQLNLELERCGIQVAGWLPSQRYADLPVLNQNVYVCGINPFLSRTATTLMRRRKCKLISAPFPIGPDGTRAWLEKICSVFNVAPINLIERERLIWDSLEDYITLLRGKSVFFMGDNLLEISLARFLVRCGMIVYEIGIPYLDKRFQSAELQLLEKTCSEMNVAMPRIVEKPDNYNQIQRIRELQPDLAITGMAHANPLEARGINTKWSVEFTFAQIHGFTNARDILELVTRPLRRNKALENLGWNQLVKM.

The [4Fe-4S] cluster site is built by Cys-23, Cys-48, and Cys-108.

Belongs to the BchN/ChlN family. As to quaternary structure, protochlorophyllide reductase is composed of three subunits; ChlL, ChlN and ChlB. Forms a heterotetramer of two ChlB and two ChlN subunits. [4Fe-4S] cluster is required as a cofactor.

It is found in the plastid. The protein localises to the chloroplast. It carries out the reaction chlorophyllide a + oxidized 2[4Fe-4S]-[ferredoxin] + 2 ADP + 2 phosphate = protochlorophyllide a + reduced 2[4Fe-4S]-[ferredoxin] + 2 ATP + 2 H2O. It functions in the pathway porphyrin-containing compound metabolism; chlorophyll biosynthesis (light-independent). Component of the dark-operative protochlorophyllide reductase (DPOR) that uses Mg-ATP and reduced ferredoxin to reduce ring D of protochlorophyllide (Pchlide) to form chlorophyllide a (Chlide). This reaction is light-independent. The NB-protein (ChlN-ChlB) is the catalytic component of the complex. This Chlorella vulgaris (Green alga) protein is Light-independent protochlorophyllide reductase subunit N.